A 565-amino-acid chain; its full sequence is Oxygen-dependent choline dehydrogenase (565 aa).

Residue 6-35 coordinates FAD; that stretch reads DYIIVGAGSAGNTLATRLTEDAGVTVLLLE. His-475 (proton acceptor) is an active-site residue.

The protein belongs to the GMC oxidoreductase family. FAD is required as a cofactor.

The enzyme catalyses choline + A = betaine aldehyde + AH2. The catalysed reaction is betaine aldehyde + NAD(+) + H2O = glycine betaine + NADH + 2 H(+). The protein operates within amine and polyamine biosynthesis; betaine biosynthesis via choline pathway; betaine aldehyde from choline (cytochrome c reductase route): step 1/1. Functionally, involved in the biosynthesis of the osmoprotectant glycine betaine. Catalyzes the oxidation of choline to betaine aldehyde and betaine aldehyde to glycine betaine at the same rate. This chain is Oxygen-dependent choline dehydrogenase, found in Pseudomonas putida (strain GB-1).